We begin with the raw amino-acid sequence, 84 residues long: Putative antitoxin VapB37 (84 aa).

Probable antitoxin component of a type II toxin-antitoxin (TA) system. Its putative cognate toxin is VapC37. The chain is Putative antitoxin VapB37 (vapB37) from Mycobacterium tuberculosis (strain CDC 1551 / Oshkosh).